A 224-amino-acid polypeptide reads, in one-letter code: EEF1A lysine methyltransferase 3 (224 aa).

S-adenosyl-L-methionine is bound by residues Trp-58, Gly-84–Gly-86, Asp-105, Trp-134, and Ala-151.

The protein belongs to the methyltransferase superfamily. METTL21 family.

It localises to the cytoplasm. Its subcellular location is the cytoskeleton. The protein resides in the microtubule organizing center. It is found in the centrosome. The catalysed reaction is L-lysyl-[protein] + 3 S-adenosyl-L-methionine = N(6),N(6),N(6)-trimethyl-L-lysyl-[protein] + 3 S-adenosyl-L-homocysteine + 3 H(+). It carries out the reaction L-lysyl-[protein] + S-adenosyl-L-methionine = N(6)-methyl-L-lysyl-[protein] + S-adenosyl-L-homocysteine + H(+). The enzyme catalyses N(6)-methyl-L-lysyl-[protein] + S-adenosyl-L-methionine = N(6),N(6)-dimethyl-L-lysyl-[protein] + S-adenosyl-L-homocysteine + H(+). It catalyses the reaction N(6),N(6)-dimethyl-L-lysyl-[protein] + S-adenosyl-L-methionine = N(6),N(6),N(6)-trimethyl-L-lysyl-[protein] + S-adenosyl-L-homocysteine + H(+). Its function is as follows. Protein-lysine methyltransferase that selectively mono-, di- and trimethylates 'Lys-165' of the translation elongation factors EEF1A1 and EEF1A2 in an aminoacyl-tRNA and GTP-dependent manner. EEF1A1 methylation by EEF1AKMT3 is dynamic as well as inducible by stress conditions, such as ER-stress, and plays a regulatory role on mRNA translation. This chain is EEF1A lysine methyltransferase 3, found in Xenopus tropicalis (Western clawed frog).